The chain runs to 229 residues: MSKLSHSEVLNTIRNGLIASCQPVDDGPMDKPEIVAAMAQASLIGGAAGLRIEGVDNLKATRPTVKAPIIAIVKRDLPDSPVRITPFLQDIDDLAAAGADIIAVDGTDRVRPVTIEAALKRIHELGCLAMADCSTLAEGLYCQQLGFDIVGSTMSGYTGGEVPNEPDYQLVKDLKAAGCFVMAEGRYNSPQLAKTAIEIGADCVTVGSALTRLEHIVGWFADEIKTAKV.

Belongs to the NanE family.

It carries out the reaction an N-acyl-D-glucosamine 6-phosphate = an N-acyl-D-mannosamine 6-phosphate. It functions in the pathway amino-sugar metabolism; N-acetylneuraminate degradation; D-fructose 6-phosphate from N-acetylneuraminate: step 3/5. In terms of biological role, converts N-acetylmannosamine-6-phosphate (ManNAc-6-P) to N-acetylglucosamine-6-phosphate (GlcNAc-6-P). The sequence is that of Putative N-acetylmannosamine-6-phosphate 2-epimerase from Actinobacillus pleuropneumoniae serotype 5b (strain L20).